A 212-amino-acid polypeptide reads, in one-letter code: uncharacterized protein (212 aa).

Disordered stretches follow at residues 1–25 (MARKRKSRNNSKIGHGAISRIGRPN) and 165–212 (STSG…HWGG). Over residues 202 to 212 (RSSSARGHWGG) the composition is skewed to low complexity.

This is an uncharacterized protein from Escherichia coli (strain K12).